Consider the following 245-residue polypeptide: Probable phosphatase NT01EI_1577 (245 aa).

Positions 7, 9, 15, 40, 73, 101, 131, 192, and 194 each coordinate Zn(2+).

The protein belongs to the PHP family. In terms of assembly, homotrimer. It depends on Zn(2+) as a cofactor.

This chain is Probable phosphatase NT01EI_1577, found in Edwardsiella ictaluri (strain 93-146).